Here is a 145-residue protein sequence, read N- to C-terminus: HIDAETMTLHHDKHHATYVANANAALEKHPEIGEDLEALLSDVDALPADIRQALINNGGGHLNHALFWELLSPEKTEISAELAADIDETFGSFDAFKEAFTTAATTRFGSGWAFLVVNPKGKLEVISTANQDTPITQGLKPILAL.

The Fe(3+) site is built by His10 and His64. Mn(2+)-binding residues include His10 and His64.

It belongs to the iron/manganese superoxide dismutase family. Requires Mn(2+) as cofactor. The cofactor is Fe(3+).

It catalyses the reaction 2 superoxide + 2 H(+) = H2O2 + O2. Its function is as follows. Destroys superoxide anion radicals which are normally produced within the cells and which are toxic to biological systems. Catalyzes the dismutation of superoxide anion radicals into O2 and H2O2 by successive reduction and oxidation of the transition metal ion at the active site. In Streptococcus acidominimus, this protein is Superoxide dismutase [Mn/Fe] (sodA).